Consider the following 325-residue polypeptide: uncharacterized protein (325 aa).

Residues 67–87 form a helical membrane-spanning segment; that stretch reads WIPFFLLFSSVVVLGGLWWLG.

The protein localises to the membrane. This is an uncharacterized protein from Synechocystis sp. (strain ATCC 27184 / PCC 6803 / Kazusa).